Reading from the N-terminus, the 119-residue chain is Large ribosomal subunit protein uL18 (119 aa).

The interval 1–22 is disordered; sequence MGHVEKVARRHKIKTRSKARGQ. The segment covering 8–19 has biased composition (basic residues); that stretch reads ARRHKIKTRSKA.

It belongs to the universal ribosomal protein uL18 family. Part of the 50S ribosomal subunit; part of the 5S rRNA/L5/L18/L25 subcomplex. Contacts the 5S and 23S rRNAs.

In terms of biological role, this is one of the proteins that bind and probably mediate the attachment of the 5S RNA into the large ribosomal subunit, where it forms part of the central protuberance. This Chlorobium phaeobacteroides (strain BS1) protein is Large ribosomal subunit protein uL18.